Consider the following 199-residue polypeptide: Recombination protein RecR (199 aa).

The C4-type zinc-finger motif lies at 58-73 (CKKCFNFTSEDECEIC). The Toprim domain occupies 81-175 (KLICVVAETK…KVTRIAYGLP (95 aa)).

It belongs to the RecR family.

May play a role in DNA repair. It seems to be involved in an RecBC-independent recombinational process of DNA repair. It may act with RecF and RecO. The chain is Recombination protein RecR from Prochlorococcus marinus (strain MIT 9312).